Consider the following 142-residue polypeptide: Large ribosomal subunit protein uL11 (142 aa).

The protein belongs to the universal ribosomal protein uL11 family. As to quaternary structure, part of the ribosomal stalk of the 50S ribosomal subunit. Interacts with L10 and the large rRNA to form the base of the stalk. L10 forms an elongated spine to which L12 dimers bind in a sequential fashion forming a multimeric L10(L12)X complex. One or more lysine residues are methylated.

Forms part of the ribosomal stalk which helps the ribosome interact with GTP-bound translation factors. This is Large ribosomal subunit protein uL11 from Shewanella loihica (strain ATCC BAA-1088 / PV-4).